A 344-amino-acid chain; its full sequence is Protein pelota homolog (344 aa).

Belongs to the eukaryotic release factor 1 family. Pelota subfamily. Monomer. It depends on a divalent metal cation as a cofactor.

The protein resides in the cytoplasm. Its function is as follows. May function in recognizing stalled ribosomes, interact with stem-loop structures in stalled mRNA molecules, and effect endonucleolytic cleavage of the mRNA. May play a role in the release non-functional ribosomes and degradation of damaged mRNAs. Has endoribonuclease activity. The chain is Protein pelota homolog from Archaeoglobus fulgidus (strain ATCC 49558 / DSM 4304 / JCM 9628 / NBRC 100126 / VC-16).